We begin with the raw amino-acid sequence, 470 residues long: Glutamate--tRNA ligase (470 aa).

The 'HIGH' region signature appears at Pro-9 to Gly-19. Positions Arg-236–Arg-240 match the 'KMSKS' region motif. Lys-239 is a binding site for ATP.

This sequence belongs to the class-I aminoacyl-tRNA synthetase family. Glutamate--tRNA ligase type 1 subfamily. As to quaternary structure, monomer.

Its subcellular location is the cytoplasm. The enzyme catalyses tRNA(Glu) + L-glutamate + ATP = L-glutamyl-tRNA(Glu) + AMP + diphosphate. Its function is as follows. Catalyzes the attachment of glutamate to tRNA(Glu) in a two-step reaction: glutamate is first activated by ATP to form Glu-AMP and then transferred to the acceptor end of tRNA(Glu). This Colwellia psychrerythraea (strain 34H / ATCC BAA-681) (Vibrio psychroerythus) protein is Glutamate--tRNA ligase.